Reading from the N-terminus, the 115-residue chain is MAALWLQSVSLLVLMLVSWSGSQAVLPPQHLCGAHLVDALYLVCGERGFFYTPKRDVDPLLGFLPAKSGGAAAGGENEVAEFAFKDQMEMMVKRGIVEQCCHKPCNIFDLQNYCN.

Residues Met-1–Ser-22 form the signal peptide. Cystine bridges form between Cys-32/Cys-101, Cys-44/Cys-114, and Cys-100/Cys-105. A propeptide spans Asp-56–Val-92 (c peptide).

It belongs to the insulin family. As to quaternary structure, heterodimer of a B chain and an A chain linked by two disulfide bonds.

The protein resides in the secreted. Functionally, insulin decreases blood glucose concentration. It increases cell permeability to monosaccharides, amino acids and fatty acids. It accelerates glycolysis, the pentose phosphate cycle, and glycogen synthesis in liver. The chain is Insulin (ins) from Verasper moseri (Barfin flounder).